We begin with the raw amino-acid sequence, 386 residues long: Enamidase (386 aa).

His-67, His-69, and Glu-164 together coordinate Zn(2+). Fe cation is bound by residues Glu-164, His-193, and His-220. Asp-276 serves as a coordination point for Zn(2+).

As to quaternary structure, homotetramer. Dimer of dimers. Fe cation is required as a cofactor. Zn(2+) serves as cofactor.

It carries out the reaction 1,4,5,6-tetrahydro-6-oxonicotinate + 2 H2O = 2-formylglutarate + NH4(+). It functions in the pathway cofactor degradation; nicotinate degradation; propanoate and pyruvate from 6-hydroxynicotinate: step 2/8. Decyclization of 6-oxo-1,4,5,6-tetrahydronicotinate to form 2-(enamine)glutarate, followed by hydrolysis to form (S)-2-formylglutarate. In Eubacterium barkeri (Clostridium barkeri), this protein is Enamidase.